The sequence spans 490 residues: Bifunctional protein HldE (490 aa).

The segment at 1–330 (MFDFDDLSQA…RKILPHAYRA (330 aa)) is ribokinase. 205–208 (NRKE) provides a ligand contact to ATP. The active site involves Asp-275. Residues 358–490 (FTNGCFDILH…LVDRARSDQR (133 aa)) form a cytidylyltransferase region.

It in the N-terminal section; belongs to the carbohydrate kinase PfkB family. This sequence in the C-terminal section; belongs to the cytidylyltransferase family. In terms of assembly, homodimer.

It catalyses the reaction D-glycero-beta-D-manno-heptose 7-phosphate + ATP = D-glycero-beta-D-manno-heptose 1,7-bisphosphate + ADP + H(+). The catalysed reaction is D-glycero-beta-D-manno-heptose 1-phosphate + ATP + H(+) = ADP-D-glycero-beta-D-manno-heptose + diphosphate. Its pathway is nucleotide-sugar biosynthesis; ADP-L-glycero-beta-D-manno-heptose biosynthesis; ADP-L-glycero-beta-D-manno-heptose from D-glycero-beta-D-manno-heptose 7-phosphate: step 1/4. It functions in the pathway nucleotide-sugar biosynthesis; ADP-L-glycero-beta-D-manno-heptose biosynthesis; ADP-L-glycero-beta-D-manno-heptose from D-glycero-beta-D-manno-heptose 7-phosphate: step 3/4. Its function is as follows. Catalyzes the phosphorylation of D-glycero-D-manno-heptose 7-phosphate at the C-1 position to selectively form D-glycero-beta-D-manno-heptose-1,7-bisphosphate. Catalyzes the ADP transfer from ATP to D-glycero-beta-D-manno-heptose 1-phosphate, yielding ADP-D-glycero-beta-D-manno-heptose. The protein is Bifunctional protein HldE of Bradyrhizobium sp. (strain ORS 278).